A 107-amino-acid polypeptide reads, in one-letter code: Sperm-specific class P protein 31 (107 aa).

The region spanning 1 to 107 is the MSP domain; the sequence is MINIDPPSGD…GEVVVKMVAS (107 aa).

In terms of tissue distribution, expressed at higher level in testis.

This chain is Sperm-specific class P protein 31 (ssp-31), found in Caenorhabditis elegans.